Reading from the N-terminus, the 339-residue chain is Phenylalanine--tRNA ligase alpha subunit (339 aa).

Residue E254 coordinates Mg(2+).

Belongs to the class-II aminoacyl-tRNA synthetase family. Phe-tRNA synthetase alpha subunit type 1 subfamily. As to quaternary structure, tetramer of two alpha and two beta subunits. Requires Mg(2+) as cofactor.

The protein localises to the cytoplasm. The catalysed reaction is tRNA(Phe) + L-phenylalanine + ATP = L-phenylalanyl-tRNA(Phe) + AMP + diphosphate + H(+). The polypeptide is Phenylalanine--tRNA ligase alpha subunit (Clostridium botulinum (strain 657 / Type Ba4)).